The sequence spans 362 residues: tRNA-specific 2-thiouridylase MnmA (362 aa).

ATP contacts are provided by residues 6 to 13 (AMSGGVDS) and Leu-32. Cys-101 (nucleophile) is an active-site residue. Cys-101 and Cys-197 are oxidised to a cystine. Gly-125 provides a ligand contact to ATP. Residues 147–149 (KDQ) form an interaction with tRNA region. Cys-197 serves as the catalytic Cysteine persulfide intermediate.

This sequence belongs to the MnmA/TRMU family.

Its subcellular location is the cytoplasm. It catalyses the reaction S-sulfanyl-L-cysteinyl-[protein] + uridine(34) in tRNA + AH2 + ATP = 2-thiouridine(34) in tRNA + L-cysteinyl-[protein] + A + AMP + diphosphate + H(+). Catalyzes the 2-thiolation of uridine at the wobble position (U34) of tRNA, leading to the formation of s(2)U34. This is tRNA-specific 2-thiouridylase MnmA from Saccharopolyspora erythraea (strain ATCC 11635 / DSM 40517 / JCM 4748 / NBRC 13426 / NCIMB 8594 / NRRL 2338).